Reading from the N-terminus, the 701-residue chain is MTVRNILVTSALPYANGSIHLGHLVEYIQTDIWVRFQKMQGHTVYYVCADDAHGTPIMLRAEREGISPEALIARVYTEHLRDFTGFHIAFDQYYSTHSDETRYYAEDIYQKLKAAGLIAIRSIEQLYDPVKNLFLPDRFVKGECPKCGAVDQYGDSCEACGAAYTPTELKNPYSAISGATPIRKASEHFFFKLSDPRCSDFLRKWTRSGNHLQVEAANKMAEWLGEEGENKLSDWDISRDAPYFGFEIPGETDKYFYVWLDAPIGYMGSFKKLCTEQGIDFDQYWKKGATTELYHFIGKDILYFHALFWPAMLENAGYRTPTQIFAHGFLTVNGEKMSKSRGTFITAESYLQQRLNPEWLRYYYAAKLNGSMEDIDLNLEDFVTRVNADLVGKYINIASRCAGFISKCFDGKLVAGEDYQLLQQTVDEYFSSWQPGVIEAAYEARDFSAAIRHIMKRTDEVNELIHVLAPWEIAKDETRERELHRACSLGIQMFYLLSCYLKPVLPYTAERIEHFLNWMALGWPRQQAGQPLSTMLLPAGHTINTYQHLITRIDPKQIAALTEANRQTMTTSNDTHSLTRHAEAQQRVIAPIAETISIEDFSKIDLRIARILDAQHVPGADKLLQLTLDIGSEQRSVFAGIKSAYDPEQLKGRLTVMVANLAPRKMKFGLSEGMVLAASGESGGPFLLAPDSGAQPGMRVK.

The short motif at 13 to 23 (PYANGSIHLGH) is the 'HIGH' region element. Zn(2+) is bound by residues C144, C147, C157, and C160. Residues 336-340 (KMSKS) carry the 'KMSKS' region motif. K339 is an ATP binding site. Positions 600 to 701 (DFSKIDLRIA…SGAQPGMRVK (102 aa)) constitute a tRNA-binding domain.

The protein belongs to the class-I aminoacyl-tRNA synthetase family. MetG type 1 subfamily. Homodimer. Zn(2+) serves as cofactor.

It localises to the cytoplasm. The catalysed reaction is tRNA(Met) + L-methionine + ATP = L-methionyl-tRNA(Met) + AMP + diphosphate. Is required not only for elongation of protein synthesis but also for the initiation of all mRNA translation through initiator tRNA(fMet) aminoacylation. This Nitrosomonas eutropha (strain DSM 101675 / C91 / Nm57) protein is Methionine--tRNA ligase.